Reading from the N-terminus, the 164-residue chain is Cytochrome c-type biogenesis protein CcmE (164 aa).

Residues 1-8 (MNPRRKKR) lie on the Cytoplasmic side of the membrane. Residues 9–29 (LTLAVALIGGVAAIASLLLYA) form a helical; Signal-anchor for type II membrane protein membrane-spanning segment. Residues 30–164 (LNSNLNLFFT…EDQSKAGGYK (135 aa)) lie on the Periplasmic side of the membrane. Residues His131 and Tyr135 each contribute to the heme site. The disordered stretch occupies residues 140–164 (VAEAMGQSHEKLDYSEDQSKAGGYK). Residues 147–158 (SHEKLDYSEDQS) show a composition bias toward basic and acidic residues.

The protein belongs to the CcmE/CycJ family.

It is found in the cell inner membrane. Functionally, heme chaperone required for the biogenesis of c-type cytochromes. Transiently binds heme delivered by CcmC and transfers the heme to apo-cytochromes in a process facilitated by CcmF and CcmH. This is Cytochrome c-type biogenesis protein CcmE from Shewanella piezotolerans (strain WP3 / JCM 13877).